Reading from the N-terminus, the 1755-residue chain is Transposon Ty1-ER1 Gag-Pol polyprotein (1755 aa).

Composition is skewed to polar residues over residues 1 to 23 (MESQ…SVTS), 48 to 60 (TKAN…TPAS), and 127 to 152 (QSQF…GNTF). Disordered regions lie at residues 1–93 (MESQ…MMTQ), 126–174 (PQSQ…PPPM), and 352–421 (GSRN…SKST). Residues 153-165 (TDSSSADSDMTST) show a composition bias toward low complexity. Positions 299 to 401 (NNGIHINNKV…NSKSKTARAH (103 aa)) are RNA-binding. Over residues 402 to 418 (NVSTSNNSPSTDNDSIS) the composition is skewed to low complexity. Residue Ser-416 is modified to Phosphoserine. Asp-461 acts as the For protease activity; shared with dimeric partner in catalysis. The tract at residues 583 to 640 (NVHTSESTRKYPYPFIHRMLAHANAQTIRYSLKNNTITYFNESDVDWSSAIDYQCPDC) is integrase-type zinc finger-like. An Integrase catalytic domain is found at 660 to 835 (NSYEPFQYLH…AGLDISTLLP (176 aa)). Residues Asp-671 and Asp-736 each contribute to the Mg(2+) site. Disordered regions lie at residues 956-1087 (SKAV…ETEK), 1092-1111 (RSPS…NIVP), and 1130-1171 (DLPL…DSNA). Residues 960-969 (SPTDSTPPST) show a composition bias toward low complexity. Over residues 1005–1015 (STPQISNIEST) the composition is skewed to polar residues. The span at 1038-1053 (ESSHASKSKDFRHSDS) shows a compositional bias: basic and acidic residues. Polar residues-rich tracts occupy residues 1054-1082 (YSEN…QISD) and 1101-1111 (PENNSSHNIVP). Positions 1178-1212 (KKRSLEDNETEIKVSRDTWNTKNMRSLEPPRSKKR) match the Bipartite nuclear localization signal motif. The 139-residue stretch at 1338–1476 (NNYYITQLDI…DILGLEIKYQ (139 aa)) folds into the Reverse transcriptase Ty1/copia-type domain. Residues Asp-1346, Asp-1427, Asp-1428, Asp-1610, Glu-1652, and Asp-1685 each coordinate Mg(2+). Residues 1610-1752 (DASYGNQPYY…IKTFKLLTNK (143 aa)) enclose the RNase H Ty1/copia-type domain.

In terms of assembly, the capsid protein forms a homotrimer, from which the VLPs are assembled. The protease is a homodimer, whose active site consists of two apposed aspartic acid residues. In terms of processing, initially, virus-like particles (VLPs) are composed of the structural unprocessed proteins Gag and Gag-Pol, and also contain the host initiator methionine tRNA (tRNA(i)-Met) which serves as a primer for minus-strand DNA synthesis, and a dimer of genomic Ty RNA. Processing of the polyproteins occurs within the particle and proceeds by an ordered pathway, called maturation. First, the protease (PR) is released by autocatalytic cleavage of the Gag-Pol polyprotein yielding capsid protein p45 and a Pol-p154 precursor protein. This cleavage is a prerequisite for subsequent processing of Pol-p154 at the remaining sites to release the mature structural and catalytic proteins. Maturation takes place prior to the RT reaction and is required to produce transposition-competent VLPs.

The protein resides in the cytoplasm. Its subcellular location is the nucleus. The enzyme catalyses DNA(n) + a 2'-deoxyribonucleoside 5'-triphosphate = DNA(n+1) + diphosphate. The catalysed reaction is Endonucleolytic cleavage to 5'-phosphomonoester.. Capsid protein (CA) is the structural component of the virus-like particle (VLP), forming the shell that encapsulates the retrotransposons dimeric RNA genome. The particles are assembled from trimer-clustered units and there are holes in the capsid shells that allow for the diffusion of macromolecules. CA also has nucleocapsid-like chaperone activity, promoting primer tRNA(i)-Met annealing to the multipartite primer-binding site (PBS), dimerization of Ty1 RNA and initiation of reverse transcription. Its function is as follows. The aspartyl protease (PR) mediates the proteolytic cleavages of the Gag and Gag-Pol polyproteins after assembly of the VLP. Functionally, reverse transcriptase/ribonuclease H (RT) is a multifunctional enzyme that catalyzes the conversion of the retro-elements RNA genome into dsDNA within the VLP. The enzyme displays a DNA polymerase activity that can copy either DNA or RNA templates, and a ribonuclease H (RNase H) activity that cleaves the RNA strand of RNA-DNA heteroduplexes during plus-strand synthesis and hydrolyzes RNA primers. The conversion leads to a linear dsDNA copy of the retrotransposon that includes long terminal repeats (LTRs) at both ends. In terms of biological role, integrase (IN) targets the VLP to the nucleus, where a subparticle preintegration complex (PIC) containing at least integrase and the newly synthesized dsDNA copy of the retrotransposon must transit the nuclear membrane. Once in the nucleus, integrase performs the integration of the dsDNA into the host genome. This chain is Transposon Ty1-ER1 Gag-Pol polyprotein (TY1B-ER1), found in Saccharomyces cerevisiae (strain ATCC 204508 / S288c) (Baker's yeast).